The primary structure comprises 137 residues: MPTINQLVRKPRQSKSKKSDSPVLNRGFNSKKKQFTNLNSPQKRGVCTRVGTMTPRKPNSALRKYARVRLSNNIEINAYIPGIGHNLQEHSVVLVRGGRVKDLPGVRYHIVRGALDTSGVDGRRQGRSLYGTKKPKN.

Residues methionine 1–lysine 57 form a disordered region. A 3-methylthioaspartic acid modification is found at aspartate 102. Residues serine 118–asparagine 137 form a disordered region.

This sequence belongs to the universal ribosomal protein uS12 family. In terms of assembly, part of the 30S ribosomal subunit. Contacts proteins S8 and S17. May interact with IF1 in the 30S initiation complex.

Its function is as follows. With S4 and S5 plays an important role in translational accuracy. In terms of biological role, interacts with and stabilizes bases of the 16S rRNA that are involved in tRNA selection in the A site and with the mRNA backbone. Located at the interface of the 30S and 50S subunits, it traverses the body of the 30S subunit contacting proteins on the other side and probably holding the rRNA structure together. The combined cluster of proteins S8, S12 and S17 appears to hold together the shoulder and platform of the 30S subunit. The polypeptide is Small ribosomal subunit protein uS12 (Staphylococcus haemolyticus (strain JCSC1435)).